Reading from the N-terminus, the 350-residue chain is Cilia- and flagella-associated protein 36 (350 aa).

Positions S142–M167 form a coiled coil. Disordered regions lie at residues G171 to A233 and R301 to K337. The segment covering L177–Q220 has biased composition (polar residues). The stretch at V280–K350 forms a coiled coil.

This sequence belongs to the CFAP36 family.

It localises to the nucleus. The protein resides in the cytoplasm. It is found in the cell projection. Its subcellular location is the cilium. The protein localises to the flagellum. This is Cilia- and flagella-associated protein 36 from Danio rerio (Zebrafish).